The chain runs to 558 residues: Cytochrome P450 monooxygenase grgG (558 aa).

The helical transmembrane segment at Pro-11–Leu-31 threads the bilayer. Residue Cys-470 participates in heme binding.

It belongs to the cytochrome P450 family. Heme serves as cofactor.

The protein resides in the membrane. It participates in secondary metabolite biosynthesis. In terms of biological role, cytochrome P450 monooxygenase; part of the gene cluster that mediates the biosynthesis of gregatin A, a fungal polyketide featuring an alkylated furanone core. The PKS grgA synthesizes C11 and C4 polyketide chains in the presence and absence of the trans-enoyl reductase grgB, respectively. The polyketide transferase grgF is then responsible for the fusion of the two carbon chains to produce the furanone skeleton of gregatin A. Next, the cytochrome P450 monooxygenase grgG performs the oxidative cyclization to furnish the gregatin scaffold and leads to the formation of desmethylgregatin A. In this transformation, grgG initially abstracts a hydrogen atom from C-8 to generate a substrate radical, from which one electron is transferred to the iron-heme center to yield a carbocationic species. Heterocyclization along with double-bond isomerizations provides desmethylgregatin A with the furanone ring. Alternatively, grgG might provide hydroxylation at the C-8 radical, which is followed by dehydration to give the cyclized desmethylgregatin A. Finally, the O-methyltransferase grgD methylates the carboxyl group of desmethylgregatin A to provide gregatin A. In Penicillium sp, this protein is Cytochrome P450 monooxygenase grgG (grgG).